A 548-amino-acid chain; its full sequence is Chaperonin GroEL (548 aa).

Residues 29 to 32 (TLGP), K50, 86 to 90 (DGTTT), G416, and D497 each bind ATP.

This sequence belongs to the chaperonin (HSP60) family. Forms a cylinder of 14 subunits composed of two heptameric rings stacked back-to-back. Interacts with the co-chaperonin GroES.

It is found in the cytoplasm. The catalysed reaction is ATP + H2O + a folded polypeptide = ADP + phosphate + an unfolded polypeptide.. Its function is as follows. Together with its co-chaperonin GroES, plays an essential role in assisting protein folding. The GroEL-GroES system forms a nano-cage that allows encapsulation of the non-native substrate proteins and provides a physical environment optimized to promote and accelerate protein folding. This Neorickettsia sennetsu (strain ATCC VR-367 / Miyayama) (Ehrlichia sennetsu) protein is Chaperonin GroEL.